Reading from the N-terminus, the 520-residue chain is Glutamate--cysteine ligase (520 aa).

This sequence belongs to the glutamate--cysteine ligase type 1 family. Type 1 subfamily.

It carries out the reaction L-cysteine + L-glutamate + ATP = gamma-L-glutamyl-L-cysteine + ADP + phosphate + H(+). The protein operates within sulfur metabolism; glutathione biosynthesis; glutathione from L-cysteine and L-glutamate: step 1/2. In Leptospira interrogans serogroup Icterohaemorrhagiae serovar copenhageni (strain Fiocruz L1-130), this protein is Glutamate--cysteine ligase.